We begin with the raw amino-acid sequence, 148 residues long: MSQPPFWQQKTLAEMSDSEWESLCDGCGQCCLNKLIDEDTDEIYFTNVACDQLNIKTCQCSNYERRFELEEDCIKLTRENLVTFAWLPPTCAYRLIGEGHDLPRWHPLLTGSKAAMHGERISVRHIAVRESEVVDWQDHILNKPSWAK.

This sequence belongs to the UPF0260 family.

The chain is UPF0260 protein YPK_2117 from Yersinia pseudotuberculosis serotype O:3 (strain YPIII).